Reading from the N-terminus, the 479-residue chain is Glutamyl-tRNA(Gln) amidotransferase subunit A (479 aa).

Active-site charge relay system residues include Lys71 and Ser146. The Acyl-ester intermediate role is filled by Ser170.

It belongs to the amidase family. GatA subfamily. In terms of assembly, heterotrimer of A, B and C subunits.

It catalyses the reaction L-glutamyl-tRNA(Gln) + L-glutamine + ATP + H2O = L-glutaminyl-tRNA(Gln) + L-glutamate + ADP + phosphate + H(+). Allows the formation of correctly charged Gln-tRNA(Gln) through the transamidation of misacylated Glu-tRNA(Gln) in organisms which lack glutaminyl-tRNA synthetase. The reaction takes place in the presence of glutamine and ATP through an activated gamma-phospho-Glu-tRNA(Gln). In Lactobacillus acidophilus (strain ATCC 700396 / NCK56 / N2 / NCFM), this protein is Glutamyl-tRNA(Gln) amidotransferase subunit A.